The sequence spans 127 residues: F420-non-reducing hydrogenase subunit G (127 aa).

This sequence belongs to the [NiFe]/[NiFeSe] hydrogenase small subunit family. In terms of assembly, the F420-non-reducing hydrogenase is composed of three subunits; MvhA, MvhD and MvhG. It forms a complex with the heterodisulfide reductase (hdr).

Part of a complex that provides reducing equivalents for heterodisulfide reductase. This chain is F420-non-reducing hydrogenase subunit G (mvhG), found in Methanothermus fervidus.